Reading from the N-terminus, the 427-residue chain is Histidine--tRNA ligase (427 aa).

This sequence belongs to the class-II aminoacyl-tRNA synthetase family. Homodimer.

The protein resides in the cytoplasm. It carries out the reaction tRNA(His) + L-histidine + ATP = L-histidyl-tRNA(His) + AMP + diphosphate + H(+). This is Histidine--tRNA ligase from Mannheimia succiniciproducens (strain KCTC 0769BP / MBEL55E).